The following is a 185-amino-acid chain: Imidazoleglycerol-phosphate dehydratase (185 aa).

This sequence belongs to the imidazoleglycerol-phosphate dehydratase family.

Its subcellular location is the cytoplasm. The enzyme catalyses D-erythro-1-(imidazol-4-yl)glycerol 3-phosphate = 3-(imidazol-4-yl)-2-oxopropyl phosphate + H2O. It participates in amino-acid biosynthesis; L-histidine biosynthesis; L-histidine from 5-phospho-alpha-D-ribose 1-diphosphate: step 6/9. This chain is Imidazoleglycerol-phosphate dehydratase, found in Pyrobaculum arsenaticum (strain DSM 13514 / JCM 11321 / PZ6).